Consider the following 601-residue polypeptide: DNA ligase (601 aa).

An ATP-binding site is contributed by aspartate 258. Lysine 260 (N6-AMP-lysine intermediate) is an active-site residue. Positions 265, 280, 310, 350, 427, and 433 each coordinate ATP. A disordered region spans residues 568–601 (DKSPEDATTTDEILEMYNKQPKKKIESPPIDESV).

This sequence belongs to the ATP-dependent DNA ligase family. Mg(2+) is required as a cofactor.

It carries out the reaction ATP + (deoxyribonucleotide)n-3'-hydroxyl + 5'-phospho-(deoxyribonucleotide)m = (deoxyribonucleotide)n+m + AMP + diphosphate.. Functionally, DNA ligase that seals nicks in double-stranded DNA during DNA replication, DNA recombination and DNA repair. In Saccharolobus islandicus (strain Y.N.15.51 / Yellowstone #2) (Sulfolobus islandicus), this protein is DNA ligase.